Here is a 215-residue protein sequence, read N- to C-terminus: Large ribosomal subunit protein uL3 (215 aa).

The residue at position 151 (Q151) is an N5-methylglutamine.

The protein belongs to the universal ribosomal protein uL3 family. In terms of assembly, part of the 50S ribosomal subunit. Forms a cluster with proteins L14 and L19. Post-translationally, methylated by PrmB.

Its function is as follows. One of the primary rRNA binding proteins, it binds directly near the 3'-end of the 23S rRNA, where it nucleates assembly of the 50S subunit. This is Large ribosomal subunit protein uL3 from Rickettsia massiliae (strain Mtu5).